A 286-amino-acid chain; its full sequence is Phosducin-like protein 2 (286 aa).

Phosphoserine is present on residues S35 and S62. Residues 96–286 (FGEVFHINKP…INDDDDGFFD (191 aa)) form a thioredoxin fold region.

This sequence belongs to the phosducin family. In terms of assembly, interacts with the G protein beta-gamma subunit complex (STE4-STE18 complex). Interacts with CCT2; this interaction leads to inhibition of CCT complex mediated actin folding.

Its subcellular location is the cytoplasm. Its function is as follows. Essential for cell growth. Inhibits early G-protein signaling events following pheromone stimulation. Inhibits the folding activity of the chaperonin-containing T-complex (CCT) CCT2 which leads to inhibition of cytoskeletal actin folding. Plays a role in cell cycle progression in G1/S phase. This chain is Phosducin-like protein 2, found in Saccharomyces cerevisiae (strain ATCC 204508 / S288c) (Baker's yeast).